The primary structure comprises 137 residues: uncharacterized protein (137 aa).

This is an uncharacterized protein from Bacillus subtilis (strain 168).